The sequence spans 529 residues: Peptide chain release factor 3 (529 aa).

Positions 11–280 constitute a tr-type G domain; that stretch reads NKRRTFAIIS…GLTEWAPKPQ (270 aa). GTP is bound by residues 20–27, 88–92, and 142–145; these read SHPDAGKT, DTPGH, and NKLD.

The protein belongs to the TRAFAC class translation factor GTPase superfamily. Classic translation factor GTPase family. PrfC subfamily.

The protein localises to the cytoplasm. In terms of biological role, increases the formation of ribosomal termination complexes and stimulates activities of RF-1 and RF-2. It binds guanine nucleotides and has strong preference for UGA stop codons. It may interact directly with the ribosome. The stimulation of RF-1 and RF-2 is significantly reduced by GTP and GDP, but not by GMP. This chain is Peptide chain release factor 3, found in Mannheimia succiniciproducens (strain KCTC 0769BP / MBEL55E).